We begin with the raw amino-acid sequence, 465 residues long: Lysophospholipid acyltransferase 2 (465 aa).

9 helical membrane-spanning segments follow: residues Val-15–Leu-35, Phe-55–Ile-75, Leu-86–Tyr-106, Ser-161–Phe-181, Ala-214–Leu-234, Tyr-266–Trp-286, Ala-356–Ile-376, Val-399–Phe-419, and Val-434–Val-454. His-359 is a catalytic residue.

The protein belongs to the membrane-bound acyltransferase family. In terms of assembly, interacts with GPAT9 and DGAT1. Expressed in rosette leaves, pollen grains, developing embryos and developing seeds.

The protein resides in the endoplasmic reticulum membrane. It catalyses the reaction a 1-acyl-sn-glycero-3-phosphocholine + an acyl-CoA = a 1,2-diacyl-sn-glycero-3-phosphocholine + CoA. It carries out the reaction 1-(9Z-octadecenoyl)-sn-glycero-3-phosphocholine + (9Z)-octadecenoyl-CoA = 1,2-di-(9Z-octadecenoyl)-sn-glycero-3-phosphocholine + CoA. The catalysed reaction is 1-(9Z-octadecenoyl)-sn-glycero-3-phosphocholine + (9Z,12Z)-octadecadienoyl-CoA = 1-(9Z)-octadecenoyl-2-(9Z,12Z)-octadecadienoyl-sn-glycero-3-phosphocholine + CoA. The enzyme catalyses (9Z,12Z,15Z)-octadecatrienoyl-CoA + 1-(9Z-octadecenoyl)-sn-glycero-3-phosphocholine = 1-(9Z-octadecaenoyl)-2-(9Z,12Z,15Z-octadecatrienoyl)-sn-glycero-3-phosphocholine + CoA. It catalyses the reaction a 1-acyl-sn-glycero-3-phosphoethanolamine + an acyl-CoA = a 1,2-diacyl-sn-glycero-3-phosphoethanolamine + CoA. It carries out the reaction a 1-acyl-sn-glycero-3-phospho-L-serine + an acyl-CoA = a 1,2-diacyl-sn-glycero-3-phospho-L-serine + CoA. In terms of biological role, lysophospholipid acyltransferase with broad specificity. Mediates the conversion of lysophosphatidylethanolamine (1-acyl-sn-glycero-3-phosphoethanolamine or LPE) into phosphatidylethanolamine (1,2-diacyl-sn-glycero-3-phosphoethanolamine or PE) (LPEAT activity). Catalyzes the acylation of lysophosphatidylserine (1-acyl-2-hydroxy-sn-glycero-3-phospho-L-serine or LPS) into phosphatidylserine (1,2-diacyl-sn-glycero-3-phospho-L-serine or PS) (LPSAT activity). Can convert lysophosphatidylcholine (1-acyl-sn-glycero-3-phosphocholine or LPC) into phosphatidylcholine (1,2-diacyl-sn-glycero-3-phosphocholine or PC) (LPCAT activity). Exhibits preference for C18-unsaturated acyl-CoA when transferring an acyl group to lysophosphatidylcholine. Can also utilize lysophosphatidylglycerol (LPG) as substrate in vitro. Has neither activity towards lysophosphatidic acid (LPA) nor lysophosphatidylinositol (LPI). Lysophospholipid acyltransferases catalyze the reacylation step of the phospholipid remodeling pathway also known as the Lands cycle. The primary function of the Lands cycle is to provide a route for acyl remodeling to modify fatty acid (FA) composition of phospholipids derived from the Kennedy pathway. Is involved in PC acyl editing and phosphocholine headgroup exchange between PC and diacylglycerols. This processes control the majority of acyl fluxes through PC to provide polyunsaturated fatty acids for triacylglycerols synthesis in seeds. Involved with LPCAT1 in the direct incorporation of newly synthesized fatty acids exported form the chloroplast into PC through acyl editing. The polypeptide is Lysophospholipid acyltransferase 2 (Arabidopsis thaliana (Mouse-ear cress)).